A 477-amino-acid chain; its full sequence is POC1 centriolar protein homolog B (477 aa).

WD repeat units lie at residues glycine 16–arginine 55, glycine 58–glutamate 97, alanine 100–serine 139, arginine 142–asparagine 181, serine 183–histidine 223, valine 226–threonine 265, and glycine 268–arginine 307. Positions glutamate 449–leucine 469 form a coiled coil.

Belongs to the WD repeat POC1 family. As to quaternary structure, interacts with POC1A. Interacts with FAM161A. Interacts with CEP44; the interaction is direct and recruits POC1B to centriolar microtubules. Forms a microtubule-associated complex with POC5, CETN2 and FAM161A. Interacts with CCDC15. In terms of processing, phosphorylated in mitotic cells that may be mediated by CDK1.

Its subcellular location is the cytoplasm. It is found in the cytoskeleton. The protein resides in the microtubule organizing center. The protein localises to the centrosome. It localises to the centriole. Its subcellular location is the cilium basal body. It is found in the spindle pole. Its function is as follows. Plays an important role in centriole assembly and/or stability and ciliogenesis. Involved in early steps of centriole duplication, as well as in the later steps of centriole length control. Acts in concert with POC1A to ensure centriole integrity and proper mitotic spindle formation. Required for primary cilia formation, ciliary length and also cell proliferation. Required for retinal integrity. Acts as a positive regulator of centriole elongation. This Rattus norvegicus (Rat) protein is POC1 centriolar protein homolog B (Poc1b).